Reading from the N-terminus, the 319-residue chain is Protein sprouty homolog 1 (319 aa).

Residue M1 is modified to N-acetylmethionine. Disordered stretches follow at residues 54-78 and 100-160; these read TEGPSVVKRPAPRTAPRQEKHERTH and AVLP…QPKQ. The segment covering 69-78 has biased composition (basic and acidic residues); sequence PRQEKHERTH. A compositionally biased stretch (low complexity) spans 112 to 131; that stretch reads SRSTSTGSAASSGSNSSASS. The SPR domain occupies 183–295; the sequence is QCGKCKCGEC…CYDWIHRPGC (113 aa).

Belongs to the sprouty family. In terms of assembly, forms heterodimers with SPRY2. Interacts with TESK1. Interacts with CAV1 (via C-terminus).

The protein localises to the cytoplasm. The protein resides in the membrane. Inhibits fibroblast growth factor (FGF)-induced retinal lens fiber differentiation, probably by inhibiting FGF-mediated phosphorylation of ERK1/2. Inhibits TGFB-induced epithelial-to-mesenchymal transition in lens epithelial cells. The chain is Protein sprouty homolog 1 (SPRY1) from Homo sapiens (Human).